A 90-amino-acid polypeptide reads, in one-letter code: UPF0329 protein ECU04_1650 (90 aa).

This sequence belongs to the UPF0329 family.

The sequence is that of UPF0329 protein ECU04_1650 from Encephalitozoon cuniculi (strain GB-M1) (Microsporidian parasite).